Reading from the N-terminus, the 414-residue chain is tRNA N6-adenosine threonylcarbamoyltransferase, mitochondrial (414 aa).

Residues 1–29 constitute a mitochondrion transit peptide; that stretch reads MLMLSKTAGAIPRPPRSNVRGFIRRFNVQ. N6-acetyllysine is present on residues lysine 74 and lysine 140. Residues histidine 147 and histidine 151 each coordinate a divalent metal cation. Substrate contacts are provided by residues 169 to 173 and aspartate 202; that span reads LISGG. Lysine 203 bears the N6-acetyllysine mark. Residues glycine 222 and glutamate 226 each contribute to the substrate site. N6-acetyllysine occurs at positions 230 and 299. Substrate contacts are provided by residues 329 to 330 and threonine 357; that span reads SN. Aspartate 358 is an a divalent metal cation binding site.

It belongs to the KAE1 / TsaD family. As to quaternary structure, monomer. Requires a divalent metal cation as cofactor.

The protein resides in the mitochondrion. The catalysed reaction is L-threonylcarbamoyladenylate + adenosine(37) in tRNA = N(6)-L-threonylcarbamoyladenosine(37) in tRNA + AMP + H(+). Its function is as follows. Required for the formation of a threonylcarbamoyl group on adenosine at position 37 (t(6)A37) in mitochondrial tRNAs that read codons beginning with adenine. Probably involved in the transfer of the threonylcarbamoyl moiety of threonylcarbamoyl-AMP (TC-AMP) to the N6 group of A37. Involved in mitochondrial genome maintenance. In Rattus norvegicus (Rat), this protein is tRNA N6-adenosine threonylcarbamoyltransferase, mitochondrial.